The primary structure comprises 243 residues: Tryptophan synthase alpha chain (243 aa).

Residues Glu31 and Asp42 each act as proton acceptor in the active site.

Belongs to the TrpA family. Tetramer of two alpha and two beta chains.

It carries out the reaction (1S,2R)-1-C-(indol-3-yl)glycerol 3-phosphate + L-serine = D-glyceraldehyde 3-phosphate + L-tryptophan + H2O. It functions in the pathway amino-acid biosynthesis; L-tryptophan biosynthesis; L-tryptophan from chorismate: step 5/5. The alpha subunit is responsible for the aldol cleavage of indoleglycerol phosphate to indole and glyceraldehyde 3-phosphate. The polypeptide is Tryptophan synthase alpha chain (Staphylococcus haemolyticus (strain JCSC1435)).